We begin with the raw amino-acid sequence, 164 residues long: 3-hydroxyacyl-[acyl-carrier-protein] dehydratase FabZ (164 aa).

His61 is an active-site residue.

It belongs to the thioester dehydratase family. FabZ subfamily.

The protein localises to the cytoplasm. It carries out the reaction a (3R)-hydroxyacyl-[ACP] = a (2E)-enoyl-[ACP] + H2O. Functionally, involved in unsaturated fatty acids biosynthesis. Catalyzes the dehydration of short chain beta-hydroxyacyl-ACPs and long chain saturated and unsaturated beta-hydroxyacyl-ACPs. The protein is 3-hydroxyacyl-[acyl-carrier-protein] dehydratase FabZ of Ralstonia nicotianae (strain ATCC BAA-1114 / GMI1000) (Ralstonia solanacearum).